The primary structure comprises 203 residues: Twist-related protein 1 (203 aa).

A compositionally biased stretch (low complexity) spans 1-18; that stretch reads MMQDVSSSPVSPADDSLS. The interval 1–106 is disordered; that stretch reads MMQDVSSSPV…GGGSPQSYEE (106 aa). Positions 34–43 are enriched in basic residues; that stretch reads RGGRKRRSSS. Composition is skewed to gly residues over residues 47-66 and 81-100; these read AGGGAGPGGAASGGVGGGDE and GCGGGGGGGAGGGSSSGGGS. Residues 109–160 enclose the bHLH domain; the sequence is TQRVMANVRERQRTQSLNEAFAALRKIIPTLPSDKLSKIQTLKLAARYIDFL. Positions 162–192 are sufficient for transactivation activity; the sequence is QVLQSDELDSKMASCSYVAHERLSYAFSVWR.

As to quaternary structure, efficient DNA binding requires dimerization with another bHLH protein. Homodimer or heterodimer with E proteins such as TCF3. ID1 binds preferentially to TCF3 but does not interact efficiently with TWIST1 so ID1 levels control the amount of TCF3 available to dimerize with TWIST and thus determine the type of dimer formed.

The protein localises to the nucleus. Its function is as follows. Acts as a transcriptional regulator. Inhibits myogenesis by sequestrating E proteins, inhibiting trans-activation by MEF2, and inhibiting DNA-binding by MYOD1 through physical interaction. This interaction probably involves the basic domains of both proteins. Also represses expression of pro-inflammatory cytokines such as TNFA and IL1B. Regulates cranial suture patterning and fusion. Activates transcription as a heterodimer with E proteins. Regulates gene expression differentially, depending on dimer composition. Homodimers induce expression of FGFR2 and POSTN while heterodimers repress FGFR2 and POSTN expression and induce THBS1 expression. Heterodimerization is also required for osteoblast differentiation. Represses the activity of the circadian transcriptional activator: NPAS2-BMAL1 heterodimer. This chain is Twist-related protein 1 (TWIST1), found in Pongo pygmaeus (Bornean orangutan).